Reading from the N-terminus, the 434-residue chain is Chaperone SurA (434 aa).

Positions 1–22 (MKHSKKIVTALLALAMSQTVMA) are cleaved as a signal peptide. PpiC domains follow at residues 173-274 (EVEF…KVMD) and 283-383 (VEEV…QLMD).

The protein localises to the periplasm. The enzyme catalyses [protein]-peptidylproline (omega=180) = [protein]-peptidylproline (omega=0). Chaperone involved in the correct folding and assembly of outer membrane proteins. Recognizes specific patterns of aromatic residues and the orientation of their side chains, which are found more frequently in integral outer membrane proteins. May act in both early periplasmic and late outer membrane-associated steps of protein maturation. The polypeptide is Chaperone SurA (Shewanella denitrificans (strain OS217 / ATCC BAA-1090 / DSM 15013)).